Here is a 366-residue protein sequence, read N- to C-terminus: Leucine dehydrogenase (366 aa).

Residue Lys-80 is part of the active site. Gly-180–Tyr-186 is a binding site for NAD(+).

It belongs to the Glu/Leu/Phe/Val dehydrogenases family. As to quaternary structure, homooctamer.

It carries out the reaction L-leucine + NAD(+) + H2O = 4-methyl-2-oxopentanoate + NH4(+) + NADH + H(+). Its pathway is amino-acid degradation; L-leucine degradation; 4-methyl-2-oxopentanoate from L-leucine (dehydrogenase route): step 1/1. Inhibited by pyridoxal phosphate. In terms of biological role, catalyzes the reversible deamination of L-leucine to 4-methyl-2-oxopentanoate. Exhibits the highest activity with L-leucine as substrate, but can also use other L-amino acids such as L-isoleucine, L-valine and L-2-aminovaleric acid. All of the oxo analogs of the amino acid substrates serve as good substrates for the reverse reaction. The chain is Leucine dehydrogenase (ldh) from Thermoactinomyces intermedius.